Here is a 350-residue protein sequence, read N- to C-terminus: DNA polymerase IV (350 aa).

A UmuC domain is found at 7-188; sequence IIHIDMDYFF…LPVKKLFGVG (182 aa). Mg(2+) is bound by residues aspartate 11 and aspartate 106. Residue glutamate 107 is part of the active site.

This sequence belongs to the DNA polymerase type-Y family. As to quaternary structure, monomer. It depends on Mg(2+) as a cofactor.

Its subcellular location is the cytoplasm. It carries out the reaction DNA(n) + a 2'-deoxyribonucleoside 5'-triphosphate = DNA(n+1) + diphosphate. In terms of biological role, poorly processive, error-prone DNA polymerase involved in untargeted mutagenesis. Copies undamaged DNA at stalled replication forks, which arise in vivo from mismatched or misaligned primer ends. These misaligned primers can be extended by PolIV. Exhibits no 3'-5' exonuclease (proofreading) activity. May be involved in translesional synthesis, in conjunction with the beta clamp from PolIII. The chain is DNA polymerase IV from Francisella philomiragia subsp. philomiragia (strain ATCC 25017 / CCUG 19701 / FSC 153 / O#319-036).